The sequence spans 568 residues: Probable WRKY transcription factor 34 (568 aa).

The WRKY 1 DNA-binding region spans 172 to 236; that stretch reads ACCAPADDGY…YTGDHIHSKP (65 aa). Cys203, Cys208, His231, and His233 together coordinate Zn(2+). 2 disordered regions span residues 230 to 252 and 337 to 360; these read DHIH…TGQD and KRRK…EPRV. Residues 366-431 constitute a DNA-binding region (WRKY 2); the sequence is SDIDILDDGY…YIGKHTHVVP (66 aa). Zn(2+)-binding residues include Cys397, Cys402, His426, and His428.

Belongs to the WRKY group I family.

It localises to the nucleus. In terms of biological role, transcription factor. Interacts specifically with the W box (5'-(T)TGAC[CT]-3'), a frequently occurring elicitor-responsive cis-acting element. This chain is Probable WRKY transcription factor 34 (WRKY34), found in Arabidopsis thaliana (Mouse-ear cress).